A 260-amino-acid polypeptide reads, in one-letter code: MQKDYQKLIAYLCDFLEKEVQKKGFKKVVYGLSGGLDSAVVGVLCQKVFKENAHALLMPSSASMPESKTDALNLCEMFSIPYTEYSIAPYDKIFGFHFKDASLTRKGNFCARLRMAFLYDYSLKSDSLVIGTSNKSERMLGYGTLFGDLACAINPIGELFKTEVYELARHLNIPKKILNKPPSADLFVGQSDEKDLGYPYSVIDPLLKDIEALFKNKPIDAEALTQLGYDEILVKNITSRIQKNAFKLELPTIAKRFNPE.

An ATP-binding site is contributed by 31–38 (GLSGGLDS). D37 serves as a coordination point for Mg(2+). R112 contributes to the deamido-NAD(+) binding site. T132 is a binding site for ATP. E137 lines the Mg(2+) pocket. The ATP site is built by K161 and S183.

It belongs to the NAD synthetase family. As to quaternary structure, homodimer.

The enzyme catalyses deamido-NAD(+) + NH4(+) + ATP = AMP + diphosphate + NAD(+) + H(+). Its pathway is cofactor biosynthesis; NAD(+) biosynthesis; NAD(+) from deamido-NAD(+) (ammonia route): step 1/1. In terms of biological role, catalyzes the ATP-dependent amidation of deamido-NAD to form NAD. Uses ammonia as a nitrogen source. This is NH(3)-dependent NAD(+) synthetase from Helicobacter pylori (strain P12).